We begin with the raw amino-acid sequence, 407 residues long: Succinyl-diaminopimelate desuccinylase (407 aa).

A compositionally biased stretch (polar residues) spans 1 to 10 (MSDIDNNLTS). Positions 1 to 20 (MSDIDNNLTSQTHQQATHQQ) are disordered. The span at 11–20 (QTHQQATHQQ) shows a compositional bias: low complexity. Residue H93 participates in Zn(2+) binding. D95 is a catalytic residue. Position 126 (D126) interacts with Zn(2+). The active-site Proton acceptor is E160. Residues E161, E189, and H379 each coordinate Zn(2+).

The protein belongs to the peptidase M20A family. DapE subfamily. As to quaternary structure, homodimer. The cofactor is Zn(2+). Co(2+) is required as a cofactor.

The enzyme catalyses N-succinyl-(2S,6S)-2,6-diaminopimelate + H2O = (2S,6S)-2,6-diaminopimelate + succinate. Its pathway is amino-acid biosynthesis; L-lysine biosynthesis via DAP pathway; LL-2,6-diaminopimelate from (S)-tetrahydrodipicolinate (succinylase route): step 3/3. In terms of biological role, catalyzes the hydrolysis of N-succinyl-L,L-diaminopimelic acid (SDAP), forming succinate and LL-2,6-diaminopimelate (DAP), an intermediate involved in the bacterial biosynthesis of lysine and meso-diaminopimelic acid, an essential component of bacterial cell walls. This Psychrobacter arcticus (strain DSM 17307 / VKM B-2377 / 273-4) protein is Succinyl-diaminopimelate desuccinylase.